The chain runs to 316 residues: Aspartate carbamoyltransferase catalytic subunit (316 aa).

2 residues coordinate carbamoyl phosphate: Arg-66 and Thr-67. Lys-94 is an L-aspartate binding site. Residues Arg-116, His-146, and Gln-149 each contribute to the carbamoyl phosphate site. Residues Arg-180 and Arg-235 each contribute to the L-aspartate site. 2 residues coordinate carbamoyl phosphate: Gly-276 and Pro-277.

The protein belongs to the aspartate/ornithine carbamoyltransferase superfamily. ATCase family. In terms of assembly, heterododecamer (2C3:3R2) of six catalytic PyrB chains organized as two trimers (C3), and six regulatory PyrI chains organized as three dimers (R2).

The enzyme catalyses carbamoyl phosphate + L-aspartate = N-carbamoyl-L-aspartate + phosphate + H(+). The protein operates within pyrimidine metabolism; UMP biosynthesis via de novo pathway; (S)-dihydroorotate from bicarbonate: step 2/3. Catalyzes the condensation of carbamoyl phosphate and aspartate to form carbamoyl aspartate and inorganic phosphate, the committed step in the de novo pyrimidine nucleotide biosynthesis pathway. The polypeptide is Aspartate carbamoyltransferase catalytic subunit (Stenotrophomonas maltophilia (strain R551-3)).